The primary structure comprises 83 residues: Small ribosomal subunit protein bS20 (83 aa).

It belongs to the bacterial ribosomal protein bS20 family.

Functionally, binds directly to 16S ribosomal RNA. The polypeptide is Small ribosomal subunit protein bS20 (Staphylococcus aureus (strain JH1)).